Here is a 338-residue protein sequence, read N- to C-terminus: Tryptophan--tRNA ligase (338 aa).

Residues 11–13 (QPS) and 19–20 (GN) each bind ATP. Residues 12 to 20 (PSGELSIGN) carry the 'HIGH' region motif. An L-tryptophan-binding site is contributed by Asp135. Residues 147 to 149 (GSD), Val189, and 198 to 202 (KMSKS) contribute to the ATP site. Residues 198–202 (KMSKS) carry the 'KMSKS' region motif.

This sequence belongs to the class-I aminoacyl-tRNA synthetase family. As to quaternary structure, homodimer.

Its subcellular location is the cytoplasm. It catalyses the reaction tRNA(Trp) + L-tryptophan + ATP = L-tryptophyl-tRNA(Trp) + AMP + diphosphate + H(+). In terms of biological role, catalyzes the attachment of tryptophan to tRNA(Trp). This is Tryptophan--tRNA ligase from Aliivibrio fischeri (strain ATCC 700601 / ES114) (Vibrio fischeri).